The following is a 356-amino-acid chain: S-adenosylmethionine:tRNA ribosyltransferase-isomerase (356 aa).

Belongs to the QueA family. Monomer.

The protein resides in the cytoplasm. The enzyme catalyses 7-aminomethyl-7-carbaguanosine(34) in tRNA + S-adenosyl-L-methionine = epoxyqueuosine(34) in tRNA + adenine + L-methionine + 2 H(+). It functions in the pathway tRNA modification; tRNA-queuosine biosynthesis. Its function is as follows. Transfers and isomerizes the ribose moiety from AdoMet to the 7-aminomethyl group of 7-deazaguanine (preQ1-tRNA) to give epoxyqueuosine (oQ-tRNA). The polypeptide is S-adenosylmethionine:tRNA ribosyltransferase-isomerase (Escherichia coli O6:H1 (strain CFT073 / ATCC 700928 / UPEC)).